The following is a 470-amino-acid chain: Cysteine--tRNA ligase (470 aa).

Cysteine 28 provides a ligand contact to Zn(2+). The short motif at proline 30 to asparagine 40 is the 'HIGH' region element. Cysteine 212, histidine 237, and glutamate 241 together coordinate Zn(2+). The 'KMSKS' region motif lies at lysine 271–serine 275. Residue lysine 274 coordinates ATP.

The protein belongs to the class-I aminoacyl-tRNA synthetase family. Monomer. Zn(2+) is required as a cofactor.

It localises to the cytoplasm. It catalyses the reaction tRNA(Cys) + L-cysteine + ATP = L-cysteinyl-tRNA(Cys) + AMP + diphosphate. This is Cysteine--tRNA ligase from Ligilactobacillus salivarius (strain UCC118) (Lactobacillus salivarius).